Consider the following 382-residue polypeptide: S-adenosylmethionine synthase (382 aa).

Glu-10 provides a ligand contact to Mg(2+). An ATP-binding site is contributed by His-16. Position 44 (Glu-44) interacts with K(+). Positions 57 and 100 each coordinate L-methionine. Residues 166-168 (DTK), 234-237 (SGRF), Asp-245, 251-252 (RK), Ala-268, Lys-272, and Lys-276 contribute to the ATP site. Asp-245 contributes to the L-methionine binding site. Lys-276 lines the L-methionine pocket.

The protein belongs to the AdoMet synthase family. Mg(2+) serves as cofactor. K(+) is required as a cofactor.

The enzyme catalyses L-methionine + ATP + H2O = S-adenosyl-L-methionine + phosphate + diphosphate. The protein operates within amino-acid biosynthesis; S-adenosyl-L-methionine biosynthesis; S-adenosyl-L-methionine from L-methionine: step 1/1. Functionally, catalyzes the formation of S-adenosylmethionine from methionine and ATP. The reaction comprises two steps that are both catalyzed by the same enzyme: formation of S-adenosylmethionine (AdoMet) and triphosphate, and subsequent hydrolysis of the triphosphate. The sequence is that of S-adenosylmethionine synthase (sam1) from Schizosaccharomyces pombe (strain 972 / ATCC 24843) (Fission yeast).